The chain runs to 259 residues: MSSSKLLKYGSDDLQTIRVYRHDSGNHLSIIFIHGGAWRDPRNTFNDFEELVGKLPSTINTFGINYRLSPAVKHPAHLEDVVSAIEYLAKNYKVENVGLVGHSVGATLALQILNYKTILPGLERPLGIKMKFLVFLDGIYDVPKLVEEYPTYSSFVNEAFKTKQDYMRATPVSSEMPQFDISVEKCVILLVQSTEDELLSVQQTELMADFLQAKSIPFEKHLGAFGAHEQVYRHHKVAKLITDAIGANLDGLVRARPQN.

Positions 34–38 match the HGGXW motif; the sequence is HGGAW. Ser-103 serves as the catalytic Nucleophile. Active-site residues include Asp-196 and His-228.

The protein belongs to the kynurenine formamidase family. In terms of assembly, homodimer.

It catalyses the reaction N-formyl-L-kynurenine + H2O = L-kynurenine + formate + H(+). Its pathway is amino-acid degradation; L-tryptophan degradation via kynurenine pathway; L-kynurenine from L-tryptophan: step 2/2. In terms of biological role, catalyzes the hydrolysis of N-formyl-L-kynurenine to L-kynurenine, the second step in the kynurenine pathway of tryptophan degradation. Kynurenine may be further oxidized to nicotinic acid, NAD(H) and NADP(H). Required for elimination of toxic metabolites. The chain is Kynurenine formamidase from Meyerozyma guilliermondii (strain ATCC 6260 / CBS 566 / DSM 6381 / JCM 1539 / NBRC 10279 / NRRL Y-324) (Yeast).